Here is a 400-residue protein sequence, read N- to C-terminus: NADH-quinone oxidoreductase subunit D (400 aa).

It belongs to the complex I 49 kDa subunit family. NDH-1 is composed of 14 different subunits. Subunits NuoB, C, D, E, F, and G constitute the peripheral sector of the complex.

Its subcellular location is the cell inner membrane. The catalysed reaction is a quinone + NADH + 5 H(+)(in) = a quinol + NAD(+) + 4 H(+)(out). Functionally, NDH-1 shuttles electrons from NADH, via FMN and iron-sulfur (Fe-S) centers, to quinones in the respiratory chain. The immediate electron acceptor for the enzyme in this species is believed to be menaquinone. Couples the redox reaction to proton translocation (for every two electrons transferred, four hydrogen ions are translocated across the cytoplasmic membrane), and thus conserves the redox energy in a proton gradient. This Prosthecochloris aestuarii (strain DSM 271 / SK 413) protein is NADH-quinone oxidoreductase subunit D.